The following is a 257-amino-acid chain: 5-oxoprolinase subunit A (257 aa).

It belongs to the LamB/PxpA family. In terms of assembly, forms a complex composed of PxpA, PxpB and PxpC.

It catalyses the reaction 5-oxo-L-proline + ATP + 2 H2O = L-glutamate + ADP + phosphate + H(+). Catalyzes the cleavage of 5-oxoproline to form L-glutamate coupled to the hydrolysis of ATP to ADP and inorganic phosphate. In Bacillus subtilis (strain 168), this protein is 5-oxoprolinase subunit A.